The sequence spans 774 residues: Lon protease 1 (774 aa).

The Lon N-terminal domain maps to 9–202 (IPLLPLRGLL…KVIDFINNEK (194 aa)). 354–361 (GPPGVGKT) lines the ATP pocket. The 182-residue stretch at 590–771 (EDQVGVVTGL…DEVLEHALVG (182 aa)) folds into the Lon proteolytic domain. Active-site residues include S677 and K720.

Belongs to the peptidase S16 family. In terms of assembly, homohexamer. Organized in a ring with a central cavity. Exists as a mixture of small oligomeric species in solution.

Its subcellular location is the cytoplasm. The catalysed reaction is Hydrolysis of proteins in presence of ATP.. In terms of biological role, ATP-dependent serine protease that mediates the selective degradation of mutant and abnormal proteins as well as certain short-lived regulatory proteins. Required for cellular homeostasis and for survival from DNA damage and developmental changes induced by stress. Degrades polypeptides processively to yield small peptide fragments that are 5 to 10 amino acids long. Binds to DNA in a double-stranded, site-specific manner. Has been implicated in preventing sigma(G) activity under non-sporulation conditions. In Bacillus subtilis (strain 168), this protein is Lon protease 1.